Here is a 335-residue protein sequence, read N- to C-terminus: Fructose-1,6-bisphosphatase class 1 (335 aa).

Glutamate 89, aspartate 112, leucine 114, and aspartate 115 together coordinate Mg(2+). Substrate-binding positions include 115-118, asparagine 208, tyrosine 241, and lysine 271; that span reads DGSS. Glutamate 277 serves as a coordination point for Mg(2+).

It belongs to the FBPase class 1 family. As to quaternary structure, homotetramer. Requires Mg(2+) as cofactor.

It localises to the cytoplasm. It catalyses the reaction beta-D-fructose 1,6-bisphosphate + H2O = beta-D-fructose 6-phosphate + phosphate. It participates in carbohydrate biosynthesis; gluconeogenesis. In Proteus mirabilis (strain HI4320), this protein is Fructose-1,6-bisphosphatase class 1.